A 115-amino-acid chain; its full sequence is Promotilin (115 aa).

Positions 1–25 (MLSRKATAILLVVHAAAMLASQTEG) are cleaved as a signal peptide. Residues 43–73 (RYKGQKKSLSVQQRSEEVGPVDPAEPREEKQ) are disordered.

Belongs to the motilin family.

It localises to the secreted. Its function is as follows. Plays an important role in the regulation of interdigestive gastrointestinal motility and indirectly causes rhythmic contraction of duodenal and colonic smooth muscle. This chain is Promotilin (MLN), found in Ovis aries (Sheep).